Here is a 374-residue protein sequence, read N- to C-terminus: SH2 domain-containing protein 2A (374 aa).

Residues 116–207 enclose the SH2 domain; the sequence is WFHGFITRRE…PYGEILTQPL (92 aa). The segment at 213–232 is disordered; it reads EPAGLSLRADSDSGSKRQDP. Positions 221–232 are enriched in basic and acidic residues; sequence ADSDSGSKRQDP. The residue at position 237 (serine 237) is a Phosphoserine. The disordered stretch occupies residues 241-301; it reads QQGQAQASGH…QAPPINPIYQ (61 aa). The span at 256–266 shows a compositional bias: polar residues; that stretch reads ASQQKATSQAS. The short motif at 267-273 is the SH3-binding element; it reads RPRPPIP. Over residues 268-279 the composition is skewed to pro residues; the sequence is PRPPIPAKPQLP. Phosphoserine is present on serine 316. Disordered stretches follow at residues 321 to 340 and 353 to 374; these read PSNIYAEVEGPSGTAPIGHP and GQVREVQGKISSRSRAERGSPS.

Interacts with KDR. Interacts with p56-LCK, TXK and ITK. In terms of processing, phosphorylated on tyrosine residues upon TCR-stimulation. As to expression, expression limited to tissues of the immune system and, in particular, activated T-cells and natural killer cells. Expressed in the thymus, lymph node, and to a lesser extent, in the spleen and bone marrow. According to PubMed:10553045, also expressed in the lung.

It is found in the cytoplasm. It localises to the cell membrane. Its function is as follows. Could be a T-cell-specific adapter protein involved in the control of T-cell activation. May play a role in p56-LCK-mediated T-cell signaling. Could be involved in the regulation of responses to T-cell activation stimuli, specifically proliferation and lymphokine production. Interactions with ITK and TXK may provide important biochemical links of these two important kinases with other components in the T-cell activation machinery. The sequence is that of SH2 domain-containing protein 2A (Sh2d2a) from Mus musculus (Mouse).